A 188-amino-acid polypeptide reads, in one-letter code: GMP synthase [glutamine-hydrolyzing] subunit A (188 aa).

The 188-residue stretch at 1–188 (MIIIMDNGGQ…RNFAKICGEL (188 aa)) folds into the Glutamine amidotransferase type-1 domain. Catalysis depends on C78, which acts as the Nucleophile. Residues H165 and E167 contribute to the active site.

In terms of assembly, heterodimer composed of a glutamine amidotransferase subunit (A) and a GMP-binding subunit (B).

It carries out the reaction XMP + L-glutamine + ATP + H2O = GMP + L-glutamate + AMP + diphosphate + 2 H(+). Its pathway is purine metabolism; GMP biosynthesis; GMP from XMP (L-Gln route): step 1/1. In terms of biological role, catalyzes the synthesis of GMP from XMP. The polypeptide is GMP synthase [glutamine-hydrolyzing] subunit A (Pyrococcus furiosus (strain ATCC 43587 / DSM 3638 / JCM 8422 / Vc1)).